Consider the following 243-residue polypeptide: Mitochondrial import inner membrane translocase subunit TIM17-2 (243 aa).

Helical transmembrane passes span 19–36, 66–83, 90–109, and 115–137; these read IGGA…FHFI, FAVW…MVYL, WNSI…RQGA, and SAIF…NKVL. 10 repeat units span residues 149–151, 152–154, 155–157, 158–160, 161–163, 164–166, 167–169, 170–172, 173–175, and 176–178. The tract at residues 149–178 is 10 X approximate repeats GMQ/P; the sequence is GMQGMPGMQGMQGMPGMPGMQGMPGMQGMQ. A compositionally biased stretch (low complexity) spans 166–183; sequence PGMQGMPGMQGMQMGQMQ. A disordered region spans residues 166–243; sequence PGMQGMPGMQ…APPVPSFEFK (78 aa). A compositionally biased stretch (polar residues) spans 184 to 198; that stretch reads SQAQIRSESQNQNTA. Residues 211–228 show a composition bias toward basic and acidic residues; the sequence is FDKKKEEVQPGSESKTEV.

This sequence belongs to the Tim17/Tim22/Tim23 family. In terms of assembly, component of the TIM17:23 complex at least composed of TIM23, TIM17 and TIM50. The complex interacts with the TIM44 component of the PAM complex. Interacts with TIM23-2. As to expression, expressed in roots, flowers, leaves and young cotyledons.

It localises to the mitochondrion inner membrane. Its subcellular location is the mitochondrion outer membrane. Its function is as follows. Essential component of the TIM17:23 complex, a complex that mediates the translocation of transit peptide-containing proteins across the mitochondrial inner membrane. Links the inner and outer membranes. In Arabidopsis thaliana (Mouse-ear cress), this protein is Mitochondrial import inner membrane translocase subunit TIM17-2 (TIM17-2).